Here is a 2025-residue protein sequence, read N- to C-terminus: E3 ubiquitin-protein ligase TTC3 (2025 aa).

Residues 1 to 230 form an interaction with POLG region; that stretch reads MDNFAEGDFT…TQSCMDCIEE (230 aa). 2 TPR repeats span residues 231 to 264 and 266 to 298; these read GELM…RPEN and LLYG…KNTW. The residue at position 378 (Ser378) is a Phosphoserine; by PKB/AKT2. The tract at residues 423 to 458 is disordered; it reads DCHPEFSPPSSQPPKHKGKQKSRNNESEKFSSSSPL. TPR repeat units follow at residues 536-572 and 576-609; these read VLVV…YPSE and CLAY…IYRL. Residues 786–805 form a disordered region; it reads ERMEEDLRESNPPKNEEQKE. The segment covering 793 to 805 has biased composition (basic and acidic residues); the sequence is RESNPPKNEEQKE. Ser1009 is subject to Phosphoserine. Disordered regions lie at residues 1012–1068, 1215–1295, 1773–1842, and 1894–1944; these read APFS…GPFA, KPDV…SCNS, DPSV…SPKK, and ILDE…QKAE. Basic residues predominate over residues 1019-1029; sequence VKNKSKKKKPK. The segment covering 1038 to 1052 has biased composition (polar residues); it reads SGTTSVTSNNEIITS. Position 1061 is a phosphoserine (Ser1061). Positions 1894–1912 are enriched in basic and acidic residues; that stretch reads ILDEQKKKKPNPGKDKRTY. Positions 1913-1928 are enriched in polar residues; sequence EPSSATPVTRSSQGSP. An RING-type zinc finger spans residues 1957–1997; that stretch reads CEICHEVFKSKNVRVLKCGHKYHKGCFKQWLKGQSACPACQ. The segment at 2004–2025 is disordered; it reads EESPSGRGWPSQNQELPSCSSR. Residues 2013 to 2025 show a composition bias toward polar residues; sequence PSQNQELPSCSSR.

In terms of assembly, interacts (when phosphorylated on Ser-378) with AKT1, AKT2 and AKT3 (when phosphorylated). Interacts with CIT. Interacts with POLG. Interacts with HSP70. Interacts with SMURF2. In terms of processing, phosphorylation on Ser-378 by Akt is required for ubiquitin ligase activity. Proteolytically cleaved into differently sized N- and C-terminal fragments. In terms of tissue distribution, found in all tissues examined.

It is found in the nucleus. It localises to the cytoplasm. The protein resides in the golgi apparatus. It carries out the reaction S-ubiquitinyl-[E2 ubiquitin-conjugating enzyme]-L-cysteine + [acceptor protein]-L-lysine = [E2 ubiquitin-conjugating enzyme]-L-cysteine + N(6)-ubiquitinyl-[acceptor protein]-L-lysine.. It functions in the pathway protein modification; protein ubiquitination. Functionally, E3 ubiquitin-protein ligase which catalyzes the formation of 'Lys-48'-polyubiquitin chains. Mediates the ubiquitination and subsequent degradation of phosphorylated Akt (AKT1, AKT2 and AKT3) in the nucleus. Acts as a terminal regulator of Akt signaling after activation; its phosphorylation by Akt, which is a prerequisite for ubiquitin ligase activity, suggests the existence of a regulation mechanism required to control Akt levels after activation. Positively regulates TGFB1-induced epithelial-mesenchymal transition and myofibroblast differentiation by mediating the ubiquitination and subsequent degradation of SMURF2. Regulates neuronal differentiation by regulating actin remodeling and Golgi organization via a signaling cascade involving RHOA, CIT and ROCK. Inhibits cell proliferation. This is E3 ubiquitin-protein ligase TTC3 (TTC3) from Homo sapiens (Human).